The chain runs to 155 residues: Large ribosomal subunit protein uL30 (155 aa).

This sequence belongs to the universal ribosomal protein uL30 family. As to quaternary structure, part of the 50S ribosomal subunit.

The polypeptide is Large ribosomal subunit protein uL30 (Cenarchaeum symbiosum (strain A)).